Here is a 735-residue protein sequence, read N- to C-terminus: Coiled-coil quantitatively-enriched protein 1 (735 aa).

Residues 514–719 (AAVQYLQRRL…TLKILEQKSL (206 aa)) are a coiled coil.

In terms of assembly, interacts (during meiosis) with pcp1. Interacts with clr3, pot1, taz1 and tpz1.

The protein localises to the nucleus. It is found in the nucleoplasm. Its subcellular location is the chromosome. It localises to the telomere. Functionally, component of the meiotic bouquet that facilitates meiotic nuclear reorganization of the telomeres to the centrosome. Links telomeres to the meiotic centrosome component pcp1. Essential for the formation of normal telomere clusters during meiotic prophase. Required for telomere length regulation and chromosome segregation. Required for proper positioning of nucleosomes at heterochromatic loci and for transcriptional gene silencing (TGS) function of the Snf2/Hdac-containing repressor complex (SHREC). The protein is Coiled-coil quantitatively-enriched protein 1 (ccq1) of Schizosaccharomyces pombe (strain 972 / ATCC 24843) (Fission yeast).